Here is a 1659-residue protein sequence, read N- to C-terminus: Daxx-like protein (1659 aa).

Disordered regions lie at residues methionine 1–leucine 25 and glutamine 265–leucine 336. A coiled-coil region spans residues leucine 438–glutamine 469. Composition is skewed to low complexity over residues serine 506–glutamine 520, lysine 528–phenylalanine 542, and glycine 600–glutamine 625. Disordered regions lie at residues serine 506–phenylalanine 542, glycine 600–glycine 645, serine 658–lysine 713, threonine 872–glycine 894, leucine 924–glutamine 952, valine 1023–alanine 1060, and phenylalanine 1536–aspartate 1555. The span at lysine 626–histidine 635 shows a compositional bias: polar residues. 2 stretches are compositionally biased toward low complexity: residues serine 636–glycine 645 and serine 658–glutamine 698. 2 stretches are compositionally biased toward polar residues: residues arginine 699 to proline 711 and alanine 885 to glycine 894. Positions alanine 870 to serine 1659 are necessary for interaction with His3.3A and His3.3B. Low complexity predominate over residues leucine 924 to threonine 937. Over residues aspartate 1541–aspartate 1555 the composition is skewed to acidic residues.

In terms of assembly, interacts with p53 (via C-terminus). Interacts (via C-terminus) with His3.3A and His3.3B. Interacts with asf1. In terms of tissue distribution, ubiquitously expressed with higher levels in the head (at protein level). Expressed in the germ line, with prominent expression in primary spermatocytes and meiotic spermatocytes (at protein level). In ovaries, expressed in nurse cells and in the germinal vesicle of the ovarian follicle at stage 10 (at protein level).

It is found in the cytoplasm. Its subcellular location is the cytosol. The protein resides in the nucleus. The protein localises to the chromosome. Its function is as follows. Transcription regulator. Acts as a histone chaperone that facilitates deposition of histone H3.3. Has a role in chromatin remodeling together with asf1 and XNP. Has role in the transcriptional apoptotic response to oxidative and UV stress. The chain is Daxx-like protein from Drosophila melanogaster (Fruit fly).